A 692-amino-acid polypeptide reads, in one-letter code: Small conductance calcium-activated potassium channel-like protein 3 (692 aa).

A helical transmembrane segment spans residues 270 to 290; sequence SLYLALFGVILMLVESEITAE. Residues 313 to 333 form a helical membrane-spanning segment; the sequence is TIALLYHIILYHLNDIVLELV. Residues 349 to 369 form a helical membrane-spanning segment; sequence VIQFCIEFICCGICPLPGSGE. Residues 401 to 421 form a helical membrane-spanning segment; it reads VILSCFMLCRSYLFARFMVLH. A helical membrane pass occupies residues 455 to 475; that stretch reads PVLFLTTFTFIFWIIMSWMFV. The pore-forming intramembrane region spans 492-512; the sequence is YSNSLWFIAITFMLNGYGDIV. A helical transmembrane segment spans residues 520 to 540; the sequence is FIAIFVGVVGAVISSILIAVI. Residues 667-683 show a composition bias toward polar residues; that stretch reads HSTPNVPHLQGLTSSPV. Positions 667–692 are disordered; sequence HSTPNVPHLQGLTSSPVPSDRYDNRF.

This sequence belongs to the potassium channel KCNN family. SK subfamily. Heterooligomer.

It localises to the membrane. In terms of biological role, forms a voltage-independent potassium channel activated by intracellular calcium. The protein is Small conductance calcium-activated potassium channel-like protein 3 (kcnl-3) of Caenorhabditis elegans.